Reading from the N-terminus, the 379-residue chain is Carboxypeptidase Y-deficient protein 8 (379 aa).

The segment covering 84–107 has biased composition (low complexity); it reads HGSGNSSSKKVTSSTSSSSSNGSV. Residues 84–108 form a disordered region; that stretch reads HGSGNSSSKKVTSSTSSSSSNGSVD. Phosphoserine is present on serine 216.

The protein belongs to the VPS26 family. In terms of assembly, component of the retromer complex which consists of VPS29, VPS26, VPS35, VPS5 and VPS17. Component of a retromer subcomplex consisting of VPS29, VPS26 and VPS35.

Plays a role in vesicular protein sorting. Required for the endosome-to-Golgi retrieval of the vacuolar protein sorting receptor VPS10. Component of the membrane-associated retromer complex which is essential in endosome-to-Golgi retrograde transport. The VPS29-VPS26-VPS35 subcomplex may be involved in cargo selection. The protein is Carboxypeptidase Y-deficient protein 8 (PEP8) of Saccharomyces cerevisiae (strain ATCC 204508 / S288c) (Baker's yeast).